A 120-amino-acid polypeptide reads, in one-letter code: NAD(P)H-quinone oxidoreductase subunit 3, chloroplastic (120 aa).

3 consecutive transmembrane segments (helical) span residues 9 to 29 (IFWA…FISG), 64 to 84 (MFAL…PWAM), and 88 to 108 (VLGV…IVGL).

Belongs to the complex I subunit 3 family. In terms of assembly, NDH is composed of at least 16 different subunits, 5 of which are encoded in the nucleus.

The protein resides in the plastid. The protein localises to the chloroplast thylakoid membrane. The enzyme catalyses a plastoquinone + NADH + (n+1) H(+)(in) = a plastoquinol + NAD(+) + n H(+)(out). It carries out the reaction a plastoquinone + NADPH + (n+1) H(+)(in) = a plastoquinol + NADP(+) + n H(+)(out). Functionally, NDH shuttles electrons from NAD(P)H:plastoquinone, via FMN and iron-sulfur (Fe-S) centers, to quinones in the photosynthetic chain and possibly in a chloroplast respiratory chain. The immediate electron acceptor for the enzyme in this species is believed to be plastoquinone. Couples the redox reaction to proton translocation, and thus conserves the redox energy in a proton gradient. This chain is NAD(P)H-quinone oxidoreductase subunit 3, chloroplastic, found in Guizotia abyssinica (Niger).